A 167-amino-acid chain; its full sequence is Photosystem I assembly protein Ycf3 (167 aa).

TPR repeat units lie at residues 35 to 68 (AFTYYRDGMSAQSEGEYAEALQNYYEAMRLEIDP), 72 to 105 (SYILYNIGLIHTSNGEHAKAIEYYLQALERNPSL), and 120 to 153 (GEQAVEKEDLETSEAWFDQAADYWKQAIALAPNN).

Belongs to the Ycf3 family.

It localises to the plastid. The protein localises to the chloroplast thylakoid membrane. Essential for the assembly of the photosystem I (PSI) complex. May act as a chaperone-like factor to guide the assembly of the PSI subunits. This is Photosystem I assembly protein Ycf3 from Zygnema circumcarinatum (Green alga).